Consider the following 348-residue polypeptide: tRNA pseudouridine synthase B (348 aa).

The active-site Nucleophile is the D52.

It belongs to the pseudouridine synthase TruB family. Type 1 subfamily.

The catalysed reaction is uridine(55) in tRNA = pseudouridine(55) in tRNA. Responsible for synthesis of pseudouridine from uracil-55 in the psi GC loop of transfer RNAs. This chain is tRNA pseudouridine synthase B, found in Rhodopirellula baltica (strain DSM 10527 / NCIMB 13988 / SH1).